The sequence spans 115 residues: MPILISPSDNTGWGLGKLRIRATGLTFTDSTPVSVRHYFRDSGGQRNGRATRAHLRRNLKKYRRKHDRRTHTRRVQPDVILIKAGRRTARSARRRSARKSRSEKTGPRIRYTRRI.

Positions 2 to 23 are excised as a propeptide; that stretch reads PILISPSDNTGWGLGKLRIRAT. Residues 85-99 show a composition bias toward basic residues; sequence GRRTARSARRRSARK. Positions 85-115 are disordered; the sequence is GRRTARSARRRSARKSRSEKTGPRIRYTRRI. A Nuclear localization signal motif is present at residues 114–115; it reads RI.

This sequence belongs to the adenoviridae histone-like nucleoprotein family. Interacts with the core-capsid bridging protein; this interaction bridges the virus core to the capsid. Interacts with host NPM1; this interaction might play a role in placing the pre-histone-like nucleoprotein on the viral DNA or regulating viral gene expression. Interacts with host HMGB1; this interaction inhibits host immune response. Post-translationally, cleaved near the N-terminus by the viral protease during virion maturation to form the mature protein.

It is found in the virion. The protein localises to the host nucleus. Its subcellular location is the host nucleolus. In terms of biological role, plays a role in the inhibition of host immune response within the nucleus. Interacts with cellular nucleosomes and immobilizes the host immune danger signal HMGB1 on chromatin. In turn, prevents HMGB1 release out of the cell and thus decreases inflammation. Also plays a role in the wrapping and condensation of the viral DNA. May also promote viral genome import into the nucleus. In Pantherophis guttatus (Corn snake), this protein is Pre-histone-like nucleoprotein.